We begin with the raw amino-acid sequence, 378 residues long: Mitogen-activated protein kinase mpkC (378 aa).

The Protein kinase domain occupies 20–300 (YVNPQPIGMG…AQDALRYPYL (281 aa)). ATP contacts are provided by residues 26-34 (IGMGSFGLV) and K49. The active-site Proton acceptor is the D141. Residue T171 is modified to Phosphothreonine. The short motif at 171-173 (TGY) is the TXY element. The residue at position 173 (Y173) is a Phosphotyrosine.

Belongs to the protein kinase superfamily. Ser/Thr protein kinase family. MAP kinase subfamily. HOG1 sub-subfamily. As to quaternary structure, interacts with sakA upon osmotic and cell wall stresses. It depends on Mg(2+) as a cofactor. Dually phosphorylated on Thr-171 and Tyr-173, which activates the enzyme.

The protein resides in the cytoplasm. It is found in the nucleus. The catalysed reaction is L-seryl-[protein] + ATP = O-phospho-L-seryl-[protein] + ADP + H(+). It carries out the reaction L-threonyl-[protein] + ATP = O-phospho-L-threonyl-[protein] + ADP + H(+). Activated by tyrosine and threonine phosphorylation. Its function is as follows. Mitogen-activated protein kinase; part of an osmotic and general signal pathways involved in regulation of the response to the cell wall damage, oxidative stress, drug resistance, and establishment of infection. Required for growth on media where sorbitol or mannitol is the sole carbon source. With sakA, plays a redundant or cooperative role in the conidial stress resistance. Also plays a supportive role in osmotic stress adaptation when sakA is deficient. Involved in paradoxical growth, the cell wall integrity (CWI) pathway and biofilm formation. Acts by modulating sakA activity upon exposure to several types o stresses and during cell wall biosynthesis. Also collaborates with sakA to allow ful virulence in a neutropenic murine model of invasive pulmonary aspergillosis. MpkC and sakA have both independent and collaborative functions during the transcriptional response to transient osmotic stress, and mpkC plays a major role in the modulation of the response to DNA metabolism while activating mitochondrial functions and cation transport. The chain is Mitogen-activated protein kinase mpkC (mpkC) from Aspergillus fumigatus (strain ATCC MYA-4609 / CBS 101355 / FGSC A1100 / Af293) (Neosartorya fumigata).